The sequence spans 41 residues: Alpha-conotoxin TxIB (41 aa).

Positions 1–20 are excised as a propeptide; that stretch reads FDGRNTSANNKATDLMALPV. Intrachain disulfides connect C23–C29 and C24–C37. Positions 25–27 are ser-Xaa-Pro motif, crucial for potent interaction with nAChR; the sequence is SDP. At C37 the chain carries Cysteine amide; in Alpha-conotoxin TxIB. Residues 39–41 constitute a propeptide that is removed on maturation; the sequence is GRR.

Belongs to the conotoxin A superfamily. Expressed by the venom duct.

Its subcellular location is the secreted. Alpha-conotoxins act on postsynaptic membranes, they bind to the nicotinic acetylcholine receptors (nAChR) and thus inhibit them. This conotoxin is a subtype-specific blocker of alpha-6/alpha-3-beta-2-beta-3 (CHRNA6/CHRNA3-CHRNB2-CHRNB3) nAChRs nicotinic acetylcholine receptors (nAChRs) (IC(50)=28.4 nM). The sequence is that of Alpha-conotoxin TxIB from Conus textile (Cloth-of-gold cone).